We begin with the raw amino-acid sequence, 379 residues long: Cytochrome b (379 aa).

The next 4 membrane-spanning stretches (helical) occupy residues 33-53 (FGSL…FLAM), 77-98 (WLIR…YLHI), 113-133 (WNIG…GYVL), and 178-198 (FFAF…LHLL). Heme b-binding residues include His83 and His97. Heme b is bound by residues His182 and His196. His201 contributes to the a ubiquinone binding site. A run of 4 helical transmembrane segments spans residues 226–246 (YKDL…ALFY), 288–308 (LGGV…PILH), 320–340 (ISQL…WIGG), and 347–367 (YIII…VLNP).

It belongs to the cytochrome b family. The cytochrome bc1 complex contains 3 respiratory subunits (MT-CYB, CYC1 and UQCRFS1), 2 core proteins (UQCRC1 and UQCRC2) and probably 6 low-molecular weight proteins. The cofactor is heme b.

It is found in the mitochondrion inner membrane. Component of the ubiquinol-cytochrome c reductase complex (complex III or cytochrome b-c1 complex) that is part of the mitochondrial respiratory chain. The b-c1 complex mediates electron transfer from ubiquinol to cytochrome c. Contributes to the generation of a proton gradient across the mitochondrial membrane that is then used for ATP synthesis. In Anguilla mossambica (African longfin eel), this protein is Cytochrome b (mt-cyb).